The sequence spans 306 residues: Tyrosine recombinase EUBREC_2677 (306 aa).

Positions 2–84 (NNLQTHISSY…SIKAFFHYLE (83 aa)) constitute a Core-binding (CB) domain. The region spanning 106–296 (ILPKTIPLYI…AVSKQKDILI (191 aa)) is the Tyr recombinase domain. Residues Arg-155, Lys-179, His-248, Arg-251, and His-274 contribute to the active site. Tyr-283 functions as the O-(3'-phospho-DNA)-tyrosine intermediate in the catalytic mechanism.

The protein belongs to the 'phage' integrase family.

It is found in the cytoplasm. Functionally, site-specific tyrosine recombinase, which acts by catalyzing the cutting and rejoining of the recombining DNA molecules. The protein is Tyrosine recombinase EUBREC_2677 of Agathobacter rectalis (strain ATCC 33656 / DSM 3377 / JCM 17463 / KCTC 5835 / VPI 0990) (Eubacterium rectale).